The chain runs to 983 residues: Serine/threonine-protein kinase N2 (983 aa).

Residues 33–109 (KLDFSDTMVQ…LQELNAHIVV (77 aa)) enclose the REM-1 1 domain. Position 77 is an N6-acetyllysine (K77). Residues 107–135 (IVVSDPEDSTDCPRTPDTPNSDSRSSTSN) are disordered. S110 bears the Phosphoserine mark. A phosphothreonine mark is found at T121 and T124. Low complexity predominate over residues 121–135 (TPDTPNSDSRSSTSN). 2 consecutive REM-1 domains span residues 121–203 (TPDT…TNEL) and 204–284 (AFDN…ELPR). A phosphoserine mark is found at S301, S305, S359, and S361. Positions 351-382 (TSVALPGWSPSDNRSSFMSRTSKSKSGSSRNL) are disordered. The 121-residue stretch at 352–472 (SVALPGWSPS…LYLEPQGTLF (121 aa)) folds into the C2 domain. Residues 364–380 (RSSFMSRTSKSKSGSSR) show a composition bias toward low complexity. Positions 381–462 (NLLKTDDLSN…FLDNQRHGMC (82 aa)) are necessary to rescue apical junction formation. Phosphoserine occurs at positions 534, 582, 619, and 630. Positions 553–588 (LAPPASDSTVTKLDFDLEPEPPPAPPRASSLGETDE) are disordered. The region spanning 656–915 (FRCCAVLGRG…AEDVKKHPFF (260 aa)) is the Protein kinase domain. ATP contacts are provided by residues 662–670 (LGRGHFGKV) and K685. D781 acts as the Proton acceptor in catalysis. T815 is subject to Phosphothreonine; by PDPK1. Residues 916 to 976 (RLTDWSALMD…EEEQEMFHDF (61 aa)) are necessary for the catalytic activity. In terms of domain architecture, AGC-kinase C-terminal spans 916–983 (RLTDWSALMD…HDFDYVADWC (68 aa)). S951 carries the phosphoserine modification. T957 is modified (phosphothreonine). The interval 977 to 983 (DYVADWC) is negatively regulates the responsiveness of the catalytic activity by cardiolipin and is required for optimal activation by the GTP-bound RhoA.

This sequence belongs to the protein kinase superfamily. AGC Ser/Thr protein kinase family. PKC subfamily. As to quaternary structure, interacts (via the REM repeats) with RHOA (GTP-bound form preferentially) and interacts (via the REM repeats) with RAC1 (GTP-bound form preferentially); the interactions induce its autophosphorylation. Interacts with NCK1 (via SH3 domains). Interacts with RHOC. Interacts with NCK1 and NCK2. Interacts with CD44. Interacts (via C-terminal kinase domain) with PDPK1; the interaction stimulates PDPK1 kinase activity. Interacts with MAP3K2; the interaction activates PRK2 kinase activity in a MAP3K2-independent kinase activity. Interacts (via C-terminal domain) with AKT1; the interaction occurs with the C-terminal cleavage product of PRK2 in apoptotic cells. Interacts (via C-terminus) with PTPN13 (via PDZ 3 domain). Interacts with CDK10. Phosphorylated during mitosis. Autophosphorylated. Phosphorylated. Phosphorylated by CDK10. Post-translationally, activated by limited proteolysis with trypsin. Proteolytically cleaved by caspase-3 during the induction of apoptotic cell death. As to expression, ubiquitous. Highly expressed in liver and lung Expressed in astrocytes (at protein level). Ubiquitous.

Its subcellular location is the cytoplasm. It is found in the nucleus. It localises to the membrane. The protein localises to the cell projection. The protein resides in the lamellipodium. Its subcellular location is the cytoskeleton. It is found in the cleavage furrow. It localises to the midbody. The protein localises to the cell junction. The catalysed reaction is L-seryl-[protein] + ATP = O-phospho-L-seryl-[protein] + ADP + H(+). The enzyme catalyses L-threonyl-[protein] + ATP = O-phospho-L-threonyl-[protein] + ADP + H(+). Its activity is regulated as follows. Kinase activity is activated upon binding to GTP-bound Rho1/Rac1 GTPases. Activated by caspase-3 (CASP3) cleavage during apoptosis. Activated by lipids, particularly cardiolipin and to a lesser extent by other acidic phospholipids and unsaturated fatty acids. Two specific sites, Thr-815 (activation loop of the kinase domain) and Thr-957 (turn motif), need to be phosphorylated for its full activation. Functionally, PKC-related serine/threonine-protein kinase and Rho/Rac effector protein that participates in specific signal transduction responses in the cell. Plays a role in the regulation of cell cycle progression, actin cytoskeleton assembly, cell migration, cell adhesion, tumor cell invasion and transcription activation signaling processes. Phosphorylates CTTN in hyaluronan-induced astrocytes and hence decreases CTTN ability to associate with filamentous actin. Phosphorylates HDAC5, therefore lead to impair HDAC5 import. Direct RhoA target required for the regulation of the maturation of primordial junctions into apical junction formation in bronchial epithelial cells. Required for G2/M phases of the cell cycle progression and abscission during cytokinesis in a ECT2-dependent manner. Stimulates FYN kinase activity that is required for establishment of skin cell-cell adhesion during keratinocytes differentiation. Regulates epithelial bladder cells speed and direction of movement during cell migration and tumor cell invasion. Inhibits Akt pro-survival-induced kinase activity. Mediates Rho protein-induced transcriptional activation via the c-fos serum response factor (SRF). Involved in the negative regulation of ciliogenesis. This is Serine/threonine-protein kinase N2 (Pkn2) from Mus musculus (Mouse).